The sequence spans 168 residues: DAZ-associated protein 2 (168 aa).

Positions 1-13 are enriched in low complexity; that stretch reads MNSKGQYPTQPTY. A disordered region spans residues 1–25; it reads MNSKGQYPTQPTYPVQPPGNPVYPQ. The short motif at 39–42 is the PPAY element; that stretch reads PPAY. At Ser-77 the chain carries Phosphoserine.

Interacts with SOX6. Interacts with DAZ1 and DAZL. Interacts with IL17RB. May interact with FAM168B. Interacts with INCA1. Interacts with EIF4G1 and EIF4G2. Interacts (via PPAY motif) with NEDD4 (via WW domains). Interacts with transcription factor TCF4; the interaction results in localization of DAZAP2 to the nucleus. Interacts with transcription factors TCF7 and TCF7L1. Interacts with transcription factor LEF1. Interacts with serine/threonine-protein kinase HIPK2; the interaction results in phosphorylation of DAZAP2 which causes localization of DAZAP2 to the nucleus, reduces interaction of DAZAP2 with HIPK2 and prevents DAZAP2-dependent degradation of HIPK2. Interacts with ubiquitin ligase SIAH1; the interaction is decreased following phosphorylation of DAZAP2 by HIPK2. Interacts with TP53; the interaction is triggered by DNA damage. Post-translationally, ubiquitinated by SMURF2, leading to proteasomal degradation. Ubiquitinated by NEDD4, leading to proteasomal degradation. Following DNA damage, phosphorylated by HIPK2 which promotes DAZAP2 localization to the nucleus, reduces interaction of DAZAP2 with HIPK2 and SIAH1, and prevents DAZAP2-dependent ubiquitination of HIPK2 by E3 ubiquitin-protein ligase SIAH1 and subsequent HIPK2 proteasomal degradation. In terms of tissue distribution, widely expressed. Highly expressed in brain.

The protein localises to the cytoplasm. Its subcellular location is the nucleus. The protein resides in the nucleus speckle. It localises to the nuclear body. It is found in the stress granule. In terms of biological role, in unstressed cells, promotes SIAH1-mediated polyubiquitination and degradation of the serine/threonine-protein kinase HIPK2, probably by acting as a loading factor that potentiates complex formation between HIPK2 and ubiquitin ligase SIAH1. In response to DNA damage, localizes to the nucleus following phosphorylation by HIPK2 and modulates the expression of a subset of TP53/p53 target genes by binding to TP53 at target gene promoters. This limits the expression of a number of cell death-mediating TP53 target genes, reducing DNA damage-induced cell death. Enhances the binding of transcription factor TCF7L2/TCF4, a Wnt signaling pathway effector, to the promoters of target genes. Plays a role in stress granule formation. The protein is DAZ-associated protein 2 (Dazap2) of Mus musculus (Mouse).